We begin with the raw amino-acid sequence, 247 residues long: Coproheme decarboxylase (247 aa).

Fe-coproporphyrin III contacts are provided by residues Arg-129, 143-147, His-170, Gln-183, and Ser-221; that span reads YPMDK. Residue Tyr-143 is part of the active site.

The protein belongs to the ChdC family. Type 1 subfamily. It depends on Fe-coproporphyrin III as a cofactor.

The catalysed reaction is Fe-coproporphyrin III + 2 H2O2 + 2 H(+) = heme b + 2 CO2 + 4 H2O. It catalyses the reaction Fe-coproporphyrin III + H2O2 + H(+) = harderoheme III + CO2 + 2 H2O. It carries out the reaction harderoheme III + H2O2 + H(+) = heme b + CO2 + 2 H2O. It participates in porphyrin-containing compound metabolism; protoheme biosynthesis. In terms of biological role, involved in coproporphyrin-dependent heme b biosynthesis. Catalyzes the decarboxylation of Fe-coproporphyrin III (coproheme) to heme b (protoheme IX), the last step of the pathway. The reaction occurs in a stepwise manner with a three-propionate intermediate. This Bacillus anthracis protein is Coproheme decarboxylase.